We begin with the raw amino-acid sequence, 231 residues long: MWRRVTSVSHLFSHSKSTKFNQGASTFKIWETFTSESEIPTPSKGSPFVTFVLGGPGSGKGTQCAKIVEAFGFTHVSAGDLLRREIASGSAYGSVILSTIREGKIVPSQVTVELIQKEMESSDNYKFLIDGFPRSEENRKAFEQTIGAEPDVVLFFDCPEQEMVKRVLNRNQGRVDDNIDTIKKRLEIFDELNWPVINYYSQRGKLHKINAVGTVDEIFEKVRPIFAPLSK.

Position 57–62 (57–62 (GSGKGT)) interacts with ATP. Residues 77–106 (SAGDLLRREIASGSAYGSVILSTIREGKIV) form an NMP region. A ribonucleoside 5'-phosphate contacts are provided by residues arginine 83, 104 to 106 (KIV), and 131 to 134 (GFPR). Position 138 (asparagine 138) interacts with CMP. The segment at 169–177 (NRNQGRVDD) is LID. Arginine 170 provides a ligand contact to ATP. Arginine 174 and arginine 185 together coordinate a ribonucleoside 5'-phosphate. Residue glycine 213 coordinates ATP.

The protein belongs to the adenylate kinase family. UMP-CMP kinase subfamily. Monomer. The cofactor is Mg(2+).

The protein localises to the cytoplasm. The protein resides in the nucleus. It carries out the reaction CMP + ATP = CDP + ADP. The catalysed reaction is dCMP + ATP = dCDP + ADP. It catalyses the reaction UMP + ATP = UDP + ADP. Catalyzes the phosphorylation of pyrimidine nucleoside monophosphates at the expense of ATP. Plays an important role in de novo pyrimidine nucleotide biosynthesis. Has preference for UMP and CMP as phosphate acceptors. The chain is UMP-CMP kinase from Prunus armeniaca (Apricot).